The chain runs to 360 residues: Luc7-like protein (360 aa).

Positions K143–S206 form a coiled coil. The interval L255–Y360 is disordered. A compositionally biased stretch (basic and acidic residues) spans D269–Y293. Residues N312–N321 show a composition bias toward low complexity. Over residues R329 to Y360 the composition is skewed to basic and acidic residues.

The protein belongs to the Luc7 family.

Its subcellular location is the nucleus. In terms of biological role, may play a role in RNA splicing. This chain is Luc7-like protein (crop), found in Dictyostelium discoideum (Social amoeba).